The sequence spans 349 residues: uncharacterized protein (349 aa).

Serine 2 is subject to Phosphoserine.

This is an uncharacterized protein from Saccharomyces cerevisiae (strain ATCC 204508 / S288c) (Baker's yeast).